A 773-amino-acid chain; its full sequence is DNA gyrase subunit B (773 aa).

Residues 416–530 (SEIFLVEGDS…QGHVFIAQAP (115 aa)) form the Toprim domain. 3 residues coordinate Mg(2+): glutamate 422, aspartate 495, and aspartate 497.

The protein belongs to the type II topoisomerase GyrB family. As to quaternary structure, heterotetramer, composed of two GyrA and two GyrB chains. In the heterotetramer, GyrA contains the active site tyrosine that forms a transient covalent intermediate with DNA, while GyrB binds cofactors and catalyzes ATP hydrolysis. Mg(2+) is required as a cofactor. The cofactor is Mn(2+). Requires Ca(2+) as cofactor.

It is found in the cytoplasm. It carries out the reaction ATP-dependent breakage, passage and rejoining of double-stranded DNA.. Its function is as follows. A type II topoisomerase that negatively supercoils closed circular double-stranded (ds) DNA in an ATP-dependent manner to modulate DNA topology and maintain chromosomes in an underwound state. Negative supercoiling favors strand separation, and DNA replication, transcription, recombination and repair, all of which involve strand separation. Also able to catalyze the interconversion of other topological isomers of dsDNA rings, including catenanes and knotted rings. Type II topoisomerases break and join 2 DNA strands simultaneously in an ATP-dependent manner. The chain is DNA gyrase subunit B from Helicobacter pylori (strain J99 / ATCC 700824) (Campylobacter pylori J99).